Here is a 273-residue protein sequence, read N- to C-terminus: L-cysteine S-thiosulfotransferase subunit SoxA (273 aa).

Positions 1 to 24 are cleaved as a signal peptide; that stretch reads MKKTVTAVALLCALSSTAIAPTFA. Cys-74 and Cys-110 are oxidised to a cystine. The Cytochrome c domain maps to 162 to 273; it reads EMYELGKRMF…GVMLTPGIKR (112 aa). Heme contacts are provided by Cys-182 and His-186. A substrate-binding site is contributed by Arg-230. Cys-234 contributes to the heme binding site. Residue Cys-234 is the Cysteine persulfide intermediate of the active site.

The protein belongs to the SoxA family. In terms of assembly, heterodimer of SoxA and SoxX. Heme serves as cofactor. In terms of processing, cysteine persulfide at Cys-234.

It is found in the periplasm. The catalysed reaction is L-cysteinyl-[SoxY protein] + thiosulfate + 2 Fe(III)-[cytochrome c] = S-sulfosulfanyl-L-cysteinyl-[SoxY protein] + 2 Fe(II)-[cytochrome c] + 2 H(+). It catalyses the reaction S-sulfanyl-L-cysteinyl-[SoxY protein] + thiosulfate + 2 Fe(III)-[cytochrome c] = S-(2-sulfodisulfanyl)-L-cysteinyl-[SoxY protein] + 2 Fe(II)-[cytochrome c] + 2 H(+). Its function is as follows. C-type monoheme cytochrome, which is part of the SoxAX cytochrome complex involved in sulfur oxidation. The SoxAX complex catalyzes the formation of a heterodisulfide bond between the conserved cysteine residue on a sulfur carrier SoxYZ complex subunit SoxY and thiosulfate or other inorganic sulfur substrates. This leads to the liberation of two electrons, which may be transferred from the SoxAX complex to another cytochrome c that then channels them into the respiratory electron transport chain. Some electrons may be used for reductive CO(2) fixation. The chain is L-cysteine S-thiosulfotransferase subunit SoxA from Hydrogenophilus thermoluteolus (Pseudomonas hydrogenothermophila).